Consider the following 130-residue polypeptide: Small ribosomal subunit protein uS11 (130 aa).

This sequence belongs to the universal ribosomal protein uS11 family. Part of the 30S ribosomal subunit. Interacts with proteins S7 and S18. Binds to IF-3.

Located on the platform of the 30S subunit, it bridges several disparate RNA helices of the 16S rRNA. Forms part of the Shine-Dalgarno cleft in the 70S ribosome. The polypeptide is Small ribosomal subunit protein uS11 (Aliarcobacter butzleri (strain RM4018) (Arcobacter butzleri)).